We begin with the raw amino-acid sequence, 307 residues long: Bifunctional protein FolD (307 aa).

NADP(+)-binding positions include 165–167, Ser-190, and Ile-231; that span reads GRS.

Belongs to the tetrahydrofolate dehydrogenase/cyclohydrolase family. Homodimer.

The enzyme catalyses (6R)-5,10-methylene-5,6,7,8-tetrahydrofolate + NADP(+) = (6R)-5,10-methenyltetrahydrofolate + NADPH. The catalysed reaction is (6R)-5,10-methenyltetrahydrofolate + H2O = (6R)-10-formyltetrahydrofolate + H(+). Its pathway is one-carbon metabolism; tetrahydrofolate interconversion. Its function is as follows. Catalyzes the oxidation of 5,10-methylenetetrahydrofolate to 5,10-methenyltetrahydrofolate and then the hydrolysis of 5,10-methenyltetrahydrofolate to 10-formyltetrahydrofolate. The polypeptide is Bifunctional protein FolD (Koribacter versatilis (strain Ellin345)).